A 129-amino-acid chain; its full sequence is MLMDPVADMLTRVRNAQRVGRSFVIMPSSNQKKAIAEVLKEEGYIQSFEIKGDKKPELTIYLKYYQGRPVIETIKRVSRPGLRIFRNKDQLPRVQSGLGIAIISTSKGVMSDHKARELGVGGEVICMVA.

Belongs to the universal ribosomal protein uS8 family. Part of the 30S ribosomal subunit. Contacts proteins S5 and S12.

Its function is as follows. One of the primary rRNA binding proteins, it binds directly to 16S rRNA central domain where it helps coordinate assembly of the platform of the 30S subunit. The protein is Small ribosomal subunit protein uS8 of Dichelobacter nodosus (strain VCS1703A).